The following is a 298-amino-acid chain: Protein RKD2 (298 aa).

Composition is skewed to basic and acidic residues over residues methionine 1–lysine 10 and glutamate 81–threonine 102. Disordered regions lie at residues methionine 1–aspartate 22 and serine 73–histidine 112. One can recognise an RWP-RK domain in the interval serine 121–lysine 203. Residues asparagine 188–proline 222 are a coiled coil. The tract at residues asparagine 241 to serine 279 is disordered. Positions serine 252–aspartate 269 are enriched in low complexity. Over residues glutamate 270–serine 279 the composition is skewed to acidic residues.

The protein localises to the nucleus. In terms of biological role, putative transcription factor. The sequence is that of Protein RKD2 (RKD2) from Arabidopsis thaliana (Mouse-ear cress).